The following is a 136-amino-acid chain: Small ribosomal subunit protein bS6 (136 aa).

Residues 97–128 (EKEQSAMLSRPDRDDFPGKDEERPRPSRRQYE) show a composition bias toward basic and acidic residues. Residues 97–136 (EKEQSAMLSRPDRDDFPGKDEERPRPSRRQYEDVVEGGVE) form a disordered region.

Belongs to the bacterial ribosomal protein bS6 family.

Binds together with bS18 to 16S ribosomal RNA. This is Small ribosomal subunit protein bS6 from Bartonella bacilliformis (strain ATCC 35685 / KC583 / Herrer 020/F12,63).